A 409-amino-acid polypeptide reads, in one-letter code: Tryptophan synthase beta chain (409 aa).

Residue Lys-104 is modified to N6-(pyridoxal phosphate)lysine.

It belongs to the TrpB family. As to quaternary structure, tetramer of two alpha and two beta chains. Requires pyridoxal 5'-phosphate as cofactor.

The enzyme catalyses (1S,2R)-1-C-(indol-3-yl)glycerol 3-phosphate + L-serine = D-glyceraldehyde 3-phosphate + L-tryptophan + H2O. It functions in the pathway amino-acid biosynthesis; L-tryptophan biosynthesis; L-tryptophan from chorismate: step 5/5. Functionally, the beta subunit is responsible for the synthesis of L-tryptophan from indole and L-serine. In Trichodesmium erythraeum (strain IMS101), this protein is Tryptophan synthase beta chain.